Reading from the N-terminus, the 191-residue chain is MGVMSLSKTMVVVVLQVMILLGQEIGKVSSTLYKVGDLDAWGIPIDAKVYSKWPKSHSFKIGDSLLFLYPPSEDSLIQVTPSNFKSCNTKDPILYMNDGNSLFNLTQNGTLYFTSANPGHCTKYQKLLVSVGTYSAEAEALSPSSAADAPSYQNAFGSIPLSQKSSASSSLISAFSTVAASLACAVVGAIM.

Positions 1 to 22 (MGVMSLSKTMVVVVLQVMILLG) are cleaved as a signal peptide. The 103-residue stretch at 31–133 (TLYKVGDLDA…YQKLLVSVGT (103 aa)) folds into the Phytocyanin domain. An intrachain disulfide couples Cys-87 to Cys-121. Asn-104 and Asn-108 each carry an N-linked (GlcNAc...) asparagine glycan. Ser-165 carries the GPI-anchor amidated serine lipid modification. Residues 166–191 (SASSSLISAFSTVAASLACAVVGAIM) constitute a propeptide, removed in mature form.

It belongs to the early nodulin-like (ENODL) family. In terms of tissue distribution, mostly expressed in seedlings and roots, and, to a lower extent, in leaves, flowers, stems and seeds.

It is found in the cell membrane. Functionally, may act as a carbohydrate transporter. The sequence is that of Early nodulin-like protein 8 from Arabidopsis thaliana (Mouse-ear cress).